The sequence spans 421 residues: F-box only protein 9 (421 aa).

The disordered stretch occupies residues 1 to 63 (MAESNQNTDG…AELRRRQETA (63 aa)). Residues 11–20 (AVEEGEDENT) show a composition bias toward acidic residues. The segment covering 40-52 (LQPSSGGQRSFSR) has biased composition (polar residues). Basic and acidic residues predominate over residues 54–63 (AELRRRQETA). The TPR repeat unit spans residues 68-101 (ARELFLKAVEEEQNGAVYEAIKYYKSAMQLVPDI). Positions 158–209 (QVHISALPFEVLMYIFRWVVSCDLDLRALEQLSLVCRGFYICARDPEIWRSA) constitute an F-box domain.

In terms of assembly, part of the SCF (SKP1-CUL1-F-box) E3 ubiquitin-protein ligase complex SCF(fbxo9).

Its subcellular location is the cytoplasm. Its pathway is protein modification; protein ubiquitination. Its function is as follows. Substrate recognition component of a SCF (SKP1-CUL1-F-box protein) E3 ubiquitin-protein ligase complex which mediates the ubiquitination and subsequent proteasomal degradation of target proteins and acts as a regulator of mTOR signaling. The chain is F-box only protein 9 (fbxo9) from Danio rerio (Zebrafish).